The sequence spans 209 residues: FMN-dependent NADH:quinone oxidoreductase 2 (209 aa).

17 to 19 (SAS) contributes to the FMN binding site.

The protein belongs to the azoreductase type 1 family. Homodimer. It depends on FMN as a cofactor.

The catalysed reaction is 2 a quinone + NADH + H(+) = 2 a 1,4-benzosemiquinone + NAD(+). The enzyme catalyses N,N-dimethyl-1,4-phenylenediamine + anthranilate + 2 NAD(+) = 2-(4-dimethylaminophenyl)diazenylbenzoate + 2 NADH + 2 H(+). Its function is as follows. Quinone reductase that provides resistance to thiol-specific stress caused by electrophilic quinones. In terms of biological role, also exhibits azoreductase activity. Catalyzes the reductive cleavage of the azo bond in aromatic azo compounds to the corresponding amines. The protein is FMN-dependent NADH:quinone oxidoreductase 2 of Lactiplantibacillus plantarum (strain ATCC BAA-793 / NCIMB 8826 / WCFS1) (Lactobacillus plantarum).